Consider the following 559-residue polypeptide: Oxygen-dependent choline dehydrogenase (559 aa).

Position 4-33 (4-33) interacts with FAD; sequence DYIIIGAGSAGNVLATRLTEDSDVTVLLLE. The active-site Proton acceptor is histidine 473.

Belongs to the GMC oxidoreductase family. Requires FAD as cofactor.

It carries out the reaction choline + A = betaine aldehyde + AH2. The catalysed reaction is betaine aldehyde + NAD(+) + H2O = glycine betaine + NADH + 2 H(+). The protein operates within amine and polyamine biosynthesis; betaine biosynthesis via choline pathway; betaine aldehyde from choline (cytochrome c reductase route): step 1/1. In terms of biological role, involved in the biosynthesis of the osmoprotectant glycine betaine. Catalyzes the oxidation of choline to betaine aldehyde and betaine aldehyde to glycine betaine at the same rate. The sequence is that of Oxygen-dependent choline dehydrogenase from Cronobacter sakazakii (strain ATCC BAA-894) (Enterobacter sakazakii).